A 228-amino-acid chain; its full sequence is R-spondin-4 (228 aa).

A signal peptide spans 1 to 19 (MRAPLCLLLLLAHAVDMLA). Asn34 is a glycosylation site (N-linked (GlcNAc...) asparagine). Intrachain disulfides connect Cys35–Cys41, Cys38–Cys47, Cys50–Cys69, Cys73–Cys88, Cys91–Cys98, Cys95–Cys104, Cys107–Cys118, Cys122–Cys135, Cys139–Cys181, Cys150–Cys157, and Cys190–Cys196. An FU repeat occupies 85–128 (ANRCKKCGATCESCFSQDFCIRCKRRFHLYKGKCLPSCPPGTLT). Residues 138–197 (ECEPSPWGSWSPCIHNGKTCGSGWGLETRVREAGPAKQEETASCRVLSESRKCPIKRLCP) form the TSP type-1 domain. A disordered region spans residues 193 to 228 (KRLCPGERNPRQKNRKDRRQRKDRKLERRPHQRGSQ). The span at 203–228 (RQKNRKDRRQRKDRKLERRPHQRGSQ) shows a compositional bias: basic residues.

This sequence belongs to the R-spondin family. In terms of assembly, binds heparin. Interacts with LGR4, LGR5 and LGR6.

It localises to the secreted. Functionally, activator of the canonical Wnt signaling pathway by acting as a ligand for LGR4-6 receptors. Upon binding to LGR4-6 (LGR4, LGR5 or LGR6), LGR4-6 associate with phosphorylated LRP6 and frizzled receptors that are activated by extracellular Wnt receptors, triggering the canonical Wnt signaling pathway to increase expression of target genes. Also regulates the canonical Wnt/beta-catenin-dependent pathway and non-canonical Wnt signaling by acting as an inhibitor of ZNRF3, an important regulator of the Wnt signaling pathway. This is R-spondin-4 (Rspo4) from Mus musculus (Mouse).